An 807-amino-acid polypeptide reads, in one-letter code: Leucine--tRNA ligase (807 aa).

Positions 40–51 (PYPSGTGLHVGH) match the 'HIGH' region motif. Residues 576–580 (KMSKS) carry the 'KMSKS' region motif. K579 is a binding site for ATP.

The protein belongs to the class-I aminoacyl-tRNA synthetase family.

Its subcellular location is the cytoplasm. It catalyses the reaction tRNA(Leu) + L-leucine + ATP = L-leucyl-tRNA(Leu) + AMP + diphosphate. The polypeptide is Leucine--tRNA ligase (Pelodictyon phaeoclathratiforme (strain DSM 5477 / BU-1)).